Reading from the N-terminus, the 278-residue chain is Tryptophan synthase alpha chain (278 aa).

Active-site proton acceptor residues include Glu49 and Asp60.

It belongs to the TrpA family. Tetramer of two alpha and two beta chains.

The enzyme catalyses (1S,2R)-1-C-(indol-3-yl)glycerol 3-phosphate + L-serine = D-glyceraldehyde 3-phosphate + L-tryptophan + H2O. The protein operates within amino-acid biosynthesis; L-tryptophan biosynthesis; L-tryptophan from chorismate: step 5/5. In terms of biological role, the alpha subunit is responsible for the aldol cleavage of indoleglycerol phosphate to indole and glyceraldehyde 3-phosphate. The sequence is that of Tryptophan synthase alpha chain from Granulibacter bethesdensis (strain ATCC BAA-1260 / CGDNIH1).